Reading from the N-terminus, the 230-residue chain is Extracellular ribonuclease LE (230 aa).

Residues 1 to 25 (MASNSAFSLFLILLIITQCLSVLNA) form the signal peptide. Glutamine 37 provides a ligand contact to RNA. Disulfide bonds link cysteine 43–cysteine 49, cysteine 50–cysteine 106, cysteine 79–cysteine 125, cysteine 186–cysteine 221, and cysteine 202–cysteine 213. Residues histidine 64, phenylalanine 114, 117–118 (HE), and 121–122 (KH) each bind RNA. Histidine 64 serves as the catalytic Proton donor. The active site involves glutamate 118. The active-site Proton acceptor is histidine 122.

It belongs to the RNase T2 family.

Its subcellular location is the secreted. It is found in the extracellular space. The protein localises to the cell wall. The catalysed reaction is a ribonucleotidyl-ribonucleotide-RNA + H2O = a 3'-end 3'-phospho-ribonucleotide-RNA + a 5'-end dephospho-ribonucleoside-RNA + H(+). Probably involved in plant phosphate-starvation rescue system. This chain is Extracellular ribonuclease LE, found in Solanum lycopersicum (Tomato).